Consider the following 375-residue polypeptide: Probable aspartate aminotransferase (375 aa).

Positions 31 and 165 each coordinate L-aspartate. Residue Lys223 is modified to N6-(pyridoxal phosphate)lysine. Arg353 is a binding site for L-aspartate.

It belongs to the class-I pyridoxal-phosphate-dependent aminotransferase family. As to quaternary structure, homodimer. The cofactor is pyridoxal 5'-phosphate.

It is found in the cytoplasm. The catalysed reaction is L-aspartate + 2-oxoglutarate = oxaloacetate + L-glutamate. This Methanocaldococcus jannaschii (strain ATCC 43067 / DSM 2661 / JAL-1 / JCM 10045 / NBRC 100440) (Methanococcus jannaschii) protein is Probable aspartate aminotransferase.